The primary structure comprises 130 residues: D-ribose pyranase (130 aa).

His20 serves as the catalytic Proton donor. Substrate is bound by residues Asp28, His97, and 119–121 (YAN).

This sequence belongs to the RbsD / FucU family. RbsD subfamily. Homodecamer.

The protein localises to the cytoplasm. The enzyme catalyses beta-D-ribopyranose = beta-D-ribofuranose. It participates in carbohydrate metabolism; D-ribose degradation; D-ribose 5-phosphate from beta-D-ribopyranose: step 1/2. Its function is as follows. Catalyzes the interconversion of beta-pyran and beta-furan forms of D-ribose. This is D-ribose pyranase from Thermoanaerobacter pseudethanolicus (strain ATCC 33223 / 39E) (Clostridium thermohydrosulfuricum).